Consider the following 66-residue polypeptide: Photosystem II reaction center protein H (66 aa).

A helical membrane pass occupies residues 27–47; that stretch reads GAVPVMTVIGLLLLVFLVILL.

The protein belongs to the PsbH family. In terms of assembly, PSII is composed of 1 copy each of membrane proteins PsbA, PsbB, PsbC, PsbD, PsbE, PsbF, PsbH, PsbI, PsbJ, PsbK, PsbL, PsbM, PsbT, PsbX, PsbY, Psb30/Ycf12, peripheral proteins PsbO, CyanoQ (PsbQ), PsbU, PsbV and a large number of cofactors. It forms dimeric complexes.

Its subcellular location is the cellular thylakoid membrane. Functionally, one of the components of the core complex of photosystem II (PSII), required for its stability and/or assembly. PSII is a light-driven water:plastoquinone oxidoreductase that uses light energy to abstract electrons from H(2)O, generating O(2) and a proton gradient subsequently used for ATP formation. It consists of a core antenna complex that captures photons, and an electron transfer chain that converts photonic excitation into a charge separation. The protein is Photosystem II reaction center protein H of Prochlorococcus marinus (strain MIT 9215).